We begin with the raw amino-acid sequence, 256 residues long: Imidazole glycerol phosphate synthase subunit HisF (256 aa).

Active-site residues include aspartate 13 and aspartate 132.

This sequence belongs to the HisA/HisF family. Heterodimer of HisH and HisF.

Its subcellular location is the cytoplasm. It carries out the reaction 5-[(5-phospho-1-deoxy-D-ribulos-1-ylimino)methylamino]-1-(5-phospho-beta-D-ribosyl)imidazole-4-carboxamide + L-glutamine = D-erythro-1-(imidazol-4-yl)glycerol 3-phosphate + 5-amino-1-(5-phospho-beta-D-ribosyl)imidazole-4-carboxamide + L-glutamate + H(+). It participates in amino-acid biosynthesis; L-histidine biosynthesis; L-histidine from 5-phospho-alpha-D-ribose 1-diphosphate: step 5/9. Functionally, IGPS catalyzes the conversion of PRFAR and glutamine to IGP, AICAR and glutamate. The HisF subunit catalyzes the cyclization activity that produces IGP and AICAR from PRFAR using the ammonia provided by the HisH subunit. The polypeptide is Imidazole glycerol phosphate synthase subunit HisF (Leptospira interrogans serogroup Icterohaemorrhagiae serovar copenhageni (strain Fiocruz L1-130)).